The primary structure comprises 95 residues: Aspartyl/glutamyl-tRNA(Asn/Gln) amidotransferase subunit C (95 aa).

The protein belongs to the GatC family. As to quaternary structure, heterotrimer of A, B and C subunits.

It catalyses the reaction L-glutamyl-tRNA(Gln) + L-glutamine + ATP + H2O = L-glutaminyl-tRNA(Gln) + L-glutamate + ADP + phosphate + H(+). The enzyme catalyses L-aspartyl-tRNA(Asn) + L-glutamine + ATP + H2O = L-asparaginyl-tRNA(Asn) + L-glutamate + ADP + phosphate + 2 H(+). Allows the formation of correctly charged Asn-tRNA(Asn) or Gln-tRNA(Gln) through the transamidation of misacylated Asp-tRNA(Asn) or Glu-tRNA(Gln) in organisms which lack either or both of asparaginyl-tRNA or glutaminyl-tRNA synthetases. The reaction takes place in the presence of glutamine and ATP through an activated phospho-Asp-tRNA(Asn) or phospho-Glu-tRNA(Gln). The chain is Aspartyl/glutamyl-tRNA(Asn/Gln) amidotransferase subunit C from Shouchella clausii (strain KSM-K16) (Alkalihalobacillus clausii).